The primary structure comprises 502 residues: Probable cytosol aminopeptidase (502 aa).

Residues K269 and D274 each contribute to the Mn(2+) site. K281 is a catalytic residue. Mn(2+) is bound by residues D292, D351, and E353. R355 is an active-site residue.

Belongs to the peptidase M17 family. It depends on Mn(2+) as a cofactor.

Its subcellular location is the cytoplasm. It carries out the reaction Release of an N-terminal amino acid, Xaa-|-Yaa-, in which Xaa is preferably Leu, but may be other amino acids including Pro although not Arg or Lys, and Yaa may be Pro. Amino acid amides and methyl esters are also readily hydrolyzed, but rates on arylamides are exceedingly low.. It catalyses the reaction Release of an N-terminal amino acid, preferentially leucine, but not glutamic or aspartic acids.. Functionally, presumably involved in the processing and regular turnover of intracellular proteins. Catalyzes the removal of unsubstituted N-terminal amino acids from various peptides. The sequence is that of Probable cytosol aminopeptidase from Vibrio campbellii (strain ATCC BAA-1116).